The chain runs to 221 residues: PKHD-type hydroxylase P9215_13741 (221 aa).

One can recognise a Fe2OG dioxygenase domain in the interval 80–174; that stretch reads RIHGTMFTKT…RFVVVGWIES (95 aa). His98, Asp100, and His155 together coordinate Fe cation. A 2-oxoglutarate-binding site is contributed by Arg165.

It depends on Fe(2+) as a cofactor. Requires L-ascorbate as cofactor.

The polypeptide is PKHD-type hydroxylase P9215_13741 (Prochlorococcus marinus (strain MIT 9215)).